The sequence spans 392 residues: O-phospho-L-seryl-tRNA:Cys-tRNA synthase (392 aa).

Pyridoxal 5'-phosphate-binding positions include 84–85 (AR), asparagine 191, and 214–216 (SGH). Residue lysine 217 is modified to N6-(pyridoxal phosphate)lysine.

This sequence belongs to the SepCysS family. As to quaternary structure, homodimer. Interacts with SepRS. Requires pyridoxal 5'-phosphate as cofactor.

It carries out the reaction O-phospho-L-seryl-tRNA(Cys) + hydrogen sulfide + H(+) = L-cysteinyl-tRNA(Cys) + phosphate. Converts O-phospho-L-seryl-tRNA(Cys) (Sep-tRNA(Cys)) to L-cysteinyl-tRNA(Cys) (Cys-tRNA(Cys)). The sequence is that of O-phospho-L-seryl-tRNA:Cys-tRNA synthase from Methanopyrus kandleri (strain AV19 / DSM 6324 / JCM 9639 / NBRC 100938).